The primary structure comprises 425 residues: UDP-N-acetylglucosamine 1-carboxyvinyltransferase (425 aa).

22 to 23 (KN) contacts phosphoenolpyruvate. Arg98 provides a ligand contact to UDP-N-acetyl-alpha-D-glucosamine. Cys122 acts as the Proton donor in catalysis. Cys122 is subject to 2-(S-cysteinyl)pyruvic acid O-phosphothioketal. Residues 127–131 (RPVDQ), Asp313, and Ile335 each bind UDP-N-acetyl-alpha-D-glucosamine.

This sequence belongs to the EPSP synthase family. MurA subfamily.

The protein resides in the cytoplasm. It carries out the reaction phosphoenolpyruvate + UDP-N-acetyl-alpha-D-glucosamine = UDP-N-acetyl-3-O-(1-carboxyvinyl)-alpha-D-glucosamine + phosphate. It functions in the pathway cell wall biogenesis; peptidoglycan biosynthesis. Functionally, cell wall formation. Adds enolpyruvyl to UDP-N-acetylglucosamine. In Xylella fastidiosa (strain M23), this protein is UDP-N-acetylglucosamine 1-carboxyvinyltransferase.